A 345-amino-acid chain; its full sequence is KH domain-containing, RNA-binding, signal transduction-associated protein 2 (345 aa).

The region spanning 65 to 131 (LIPVKQYPKF…AKHAHLSDEL (67 aa)) is the KH domain. 2 disordered regions span residues 178–224 (LNGS…TRGA) and 321–345 (SRST…YGRY). Residues 336-345 (GYREHPYGRY) show a composition bias toward basic and acidic residues.

It belongs to the KHDRBS family.

The protein localises to the nucleus. Its function is as follows. RNA-binding protein that plays a role in the regulation of alternative splicing. In Xenopus tropicalis (Western clawed frog), this protein is KH domain-containing, RNA-binding, signal transduction-associated protein 2 (khdrbs2).